Reading from the N-terminus, the 639-residue chain is UvrABC system protein C (639 aa).

The 78-residue stretch at 20–97 (ERSGVYRMFD…IKKFQPKFNI (78 aa)) folds into the GIY-YIG domain. The UVR domain maps to 207-242 (KELQENLSRKMEELSSQMRFEEAAEIRDRIKALSYV).

The protein belongs to the UvrC family. As to quaternary structure, interacts with UvrB in an incision complex.

The protein localises to the cytoplasm. Its function is as follows. The UvrABC repair system catalyzes the recognition and processing of DNA lesions. UvrC both incises the 5' and 3' sides of the lesion. The N-terminal half is responsible for the 3' incision and the C-terminal half is responsible for the 5' incision. The sequence is that of UvrABC system protein C from Rickettsia africae (strain ESF-5).